We begin with the raw amino-acid sequence, 317 residues long: Putative 2-hydroxyacid dehydrogenase SE_1879 (317 aa).

NAD(+) contacts are provided by residues 155-156 (EI), 234-236 (AGR), and aspartate 260. Arginine 236 is an active-site residue. Glutamate 265 is a catalytic residue. The active-site Proton donor is histidine 283. 283–286 (HIGN) serves as a coordination point for NAD(+).

This sequence belongs to the D-isomer specific 2-hydroxyacid dehydrogenase family.

This Staphylococcus epidermidis (strain ATCC 12228 / FDA PCI 1200) protein is Putative 2-hydroxyacid dehydrogenase SE_1879.